The primary structure comprises 384 residues: GTPase Obg (384 aa).

The Obg domain occupies 1 to 159 (MKFVDEVEIR…RPLKLELMLL (159 aa)). Residues 72-94 (NGMGKNCTGRRGNDIVLPVPPGT) are disordered. The 174-residue stretch at 160-333 (ADVGLLGMPN…LCREVMSYLE (174 aa)) folds into the OBG-type G domain. GTP contacts are provided by residues 166-173 (GMPNAGKS), 191-195 (FTTLI), 213-216 (DIPG), 283-286 (NKVD), and 314-316 (AAL). 2 residues coordinate Mg(2+): Ser173 and Thr193. The tract at residues 358 to 384 (EEVLEEEMDDEDDDDDDDHDVEVIYQK) is disordered. The segment covering 360 to 377 (VLEEEMDDEDDDDDDDHD) has biased composition (acidic residues).

The protein belongs to the TRAFAC class OBG-HflX-like GTPase superfamily. OBG GTPase family. As to quaternary structure, monomer. Requires Mg(2+) as cofactor.

The protein resides in the cytoplasm. An essential GTPase which binds GTP, GDP and possibly (p)ppGpp with moderate affinity, with high nucleotide exchange rates and a fairly low GTP hydrolysis rate. Plays a role in control of the cell cycle, stress response, ribosome biogenesis and in those bacteria that undergo differentiation, in morphogenesis control. The sequence is that of GTPase Obg from Idiomarina loihiensis (strain ATCC BAA-735 / DSM 15497 / L2-TR).